Consider the following 231-residue polypeptide: Large ribosomal subunit protein uL1 (231 aa).

It belongs to the universal ribosomal protein uL1 family. As to quaternary structure, part of the 50S ribosomal subunit.

Functionally, binds directly to 23S rRNA. The L1 stalk is quite mobile in the ribosome, and is involved in E site tRNA release. In terms of biological role, protein L1 is also a translational repressor protein, it controls the translation of the L11 operon by binding to its mRNA. In Francisella philomiragia subsp. philomiragia (strain ATCC 25017 / CCUG 19701 / FSC 153 / O#319-036), this protein is Large ribosomal subunit protein uL1.